The primary structure comprises 742 residues: Feeding circuit activating peptides (742 aa).

The first 22 residues, Met1–Cys22, serve as a signal peptide directing secretion. A propeptide spanning residues Lys23–Asp98 is cleaved from the precursor. The propeptide at Gly117–Asp131 is connecting peptide. 20 consecutive propeptides follow at residues Gly164–Glu168, Arg202–Ser220, Asp236–Asn253, Ser271–Gly275, Ala293–Gly297, Phe315–Glu321, Ala339–Asp341, Phe359–Gln366, Ser384–Asn388, Ala406–Gly410, Ala428–Asp432, Gly450–Asp454, Ala472–Asp476, Ser494–Asp498, Ser516–Asp520, Ala538–Asp542, Asn560–Leu564, Asn582–Glu592, Asp610–Glu614, and Asn647–Met742.

Expressed in pleural, pedal, abdominal, buccal and cerebral ganglia.

Its subcellular location is the secreted. Initiates organized rhythmic motor output of feeding circuit. In Aplysia californica (California sea hare), this protein is Feeding circuit activating peptides.